The following is a 148-amino-acid chain: uncharacterized protein (148 aa).

Residues 7–148 form the N-acetyltransferase domain; it reads LEINYKTDEL…HDVLLWKPIR (142 aa).

This is an uncharacterized protein from Staphylococcus aureus (strain Mu50 / ATCC 700699).